Consider the following 500-residue polypeptide: Oryzalexin D synthase (500 aa).

A helical membrane pass occupies residues 4–24 (SQMWLLWGALSVALFFYFSTL). C442 is a heme binding site.

The protein belongs to the cytochrome P450 family. Heme is required as a cofactor.

It localises to the membrane. The enzyme catalyses ent-cassa-12,15-diene + reduced [NADPH--hemoprotein reductase] + O2 = ent-11beta-hydroxycassa-12,15-diene + oxidized [NADPH--hemoprotein reductase] + H2O + H(+). The catalysed reaction is ent-sandaracopimaradien-3beta-ol + reduced [NADPH--hemoprotein reductase] + O2 = oryzalexin D + oxidized [NADPH--hemoprotein reductase] + H2O + H(+). Its function is as follows. Enzyme of the diterpenoid metabolism involved in the biosynthesis of both phytocassane and the oryzalexin class of phytoalexins. Can hydroxylate syn-pimaradiene, ent-pimaradiene, ent-sandaracopimaradiene, ent-isokaurene, ent-kaurene, and ent-cassadiene, but no activity with syn-stemodene, syn-stemarene, syn-labdatriene, C11-alpha-hydroxy-ent-cassadiene or syn-pimadien-19-oic acid as substrates. Hydroxylates 3-alpha-hydroxy-ent-sandaracopimaradiene at C-7-beta, resulting in a 3-alpha,7-beta-diol corresponding to oryzalexins D. The sequence is that of Oryzalexin D synthase from Oryza sativa subsp. japonica (Rice).